A 156-amino-acid polypeptide reads, in one-letter code: Small ribosomal subunit protein uS7 (156 aa).

It belongs to the universal ribosomal protein uS7 family. Part of the 30S ribosomal subunit. Contacts proteins S9 and S11.

In terms of biological role, one of the primary rRNA binding proteins, it binds directly to 16S rRNA where it nucleates assembly of the head domain of the 30S subunit. Is located at the subunit interface close to the decoding center, probably blocks exit of the E-site tRNA. In Neisseria gonorrhoeae (strain ATCC 700825 / FA 1090), this protein is Small ribosomal subunit protein uS7.